We begin with the raw amino-acid sequence, 118 residues long: Non-specific lipid-transfer protein 1 (118 aa).

An N-terminal signal peptide occupies residues 1–25 (MASLRVSCLVALMCMVVISAPMAEA). 4 disulfide bridges follow: C29/C76, C39/C53, C54/C99, and C74/C113.

The protein belongs to the plant LTP family.

In terms of biological role, plant non-specific lipid-transfer proteins transfer phospholipids as well as galactolipids across membranes. May play a role in wax or cutin deposition in the cell walls of expanding epidermal cells and certain secretory tissues. In Lens culinaris (Lentil), this protein is Non-specific lipid-transfer protein 1.